The sequence spans 217 residues: Ribonuclease HII (217 aa).

The 191-residue stretch at 17 to 207 folds into the RNase H type-2 domain; sequence KVIYGVDEAG…CVGQSVSGAR (191 aa). Residues Asp-23, Glu-24, and Asp-116 each coordinate a divalent metal cation.

It belongs to the RNase HII family. It depends on Mn(2+) as a cofactor. Mg(2+) serves as cofactor.

The protein resides in the cytoplasm. The enzyme catalyses Endonucleolytic cleavage to 5'-phosphomonoester.. In terms of biological role, endonuclease that specifically degrades the RNA of RNA-DNA hybrids. In Nitrosomonas europaea (strain ATCC 19718 / CIP 103999 / KCTC 2705 / NBRC 14298), this protein is Ribonuclease HII.